Reading from the N-terminus, the 333-residue chain is NADH-quinone oxidoreductase subunit H (333 aa).

Transmembrane regions (helical) follow at residues 17–37 (IFFA…TYGI), 88–108 (FILA…ALPF), 117–137 (IGVG…GVVT), 159–179 (ISYE…SGSL), 191–211 (VWFI…AVAE), 241–261 (FFML…TVLF), 273–293 (FIPG…LFIW), and 313–333 (VLLP…QLFF).

Belongs to the complex I subunit 1 family. As to quaternary structure, NDH-1 is composed of 14 different subunits. Subunits NuoA, H, J, K, L, M, N constitute the membrane sector of the complex.

Its subcellular location is the cell membrane. The enzyme catalyses a quinone + NADH + 5 H(+)(in) = a quinol + NAD(+) + 4 H(+)(out). Functionally, NDH-1 shuttles electrons from NADH, via FMN and iron-sulfur (Fe-S) centers, to quinones in the respiratory chain. The immediate electron acceptor for the enzyme in this species is believed to be ubiquinone. Couples the redox reaction to proton translocation (for every two electrons transferred, four hydrogen ions are translocated across the cytoplasmic membrane), and thus conserves the redox energy in a proton gradient. This subunit may bind ubiquinone. The sequence is that of NADH-quinone oxidoreductase subunit H from Anoxybacillus flavithermus (strain DSM 21510 / WK1).